The sequence spans 3132 residues: Enniatin synthetase (3132 aa).

Residues 53 to 466 (ADDKQRAVGH…VEKVDMMTQE (414 aa)) are condensation 1. Residues 186-212 (NDEHPRQFETPDSSQATPEEDLQPNPS) form a disordered region. Residues 495–887 (SQSPNKAAVA…GRMDSQVKIR (393 aa)) form an adenylation 1 region. The interval 994-1013 (SQKTHSTPSQQSQAAISSGT) is disordered. The Carrier 1 domain maps to 1010-1086 (SSGTDTETKL…GLKAIVIGTS (77 aa)). At Ser-1047 the chain carries O-(pantetheine 4'-phosphoryl)serine. The tract at residues 1105-1534 (SYAQNRMWFL…ETCISVLPLT (430 aa)) is condensation 2. Positions 1563–1960 (FREQAAANPE…GRMDNQFKIR (398 aa)) are adenylation 2. The S-adenosyl-L-methionine-dependent N-methyltransferase stretch occupies residues 2021-2177 (EGWQDHFESG…YLAEVIDGLI (157 aa)). Carrier domains are found at residues 2504–2578 (FPIS…RQGL) and 2598–2672 (APRT…ESSH). O-(pantetheine 4'-phosphoryl)serine is present on residues Ser-2538 and Ser-2632. The interval 2719–3124 (QDVYPSTQMQ…RHVLEEVCKT (406 aa)) is condensation 3.

The protein belongs to the NRP synthetase family. It depends on pantetheine 4'-phosphate as a cofactor.

The protein operates within antibiotic biosynthesis; enniatin biosynthesis. Functionally, nonribosomal peptide synthetase that synthesizes enniatin by coupling three D-hydroxycarboxylic acids and three L-amino acids via amide and ester bonds in an alternating fashion. Whereas ESYN1 can accept different amino acids as precursors (L-valine, L-isoleucine or L-leucine), only one species of D-hydroxycarboxylic acid can be found in natural enniatin isolates (D-hydroxyisovaleric acid, D-Hiv). D-Hiv stems from L-valine deanimation by a valine aminotransferase to 2-keto-isovaleric acid (2-Kiv), which becomes subsequently reduced by a keto-isovaleric acid reductase (KivR) to D-Hiv. The polypeptide is Enniatin synthetase (Fusarium oxysporum (Fusarium vascular wilt)).